The primary structure comprises 478 residues: Calcitonin receptor (478 aa).

The N-terminal stretch at 1 to 22 (MRFTFTRQFLAFFILISNPASI) is a signal peptide. Topologically, residues 23–146 (LPRSENLTFP…FTPEKLQNAY (124 aa)) are extracellular. 4 N-linked (GlcNAc...) asparagine glycosylation sites follow: Asn-28, Asn-73, Asn-125, and Asn-130. Intrachain disulfides connect Cys-55–Cys-81, Cys-72–Cys-112, and Cys-95–Cys-134. The chain crosses the membrane as a helical span at residues 147 to 169 (VLYYLAIVGHSMSIITLVVSLGI). Over 170-181 (FVYFRSLGCQRV) the chain is Cytoplasmic. A helical membrane pass occupies residues 182 to 202 (TLHKNMFLTYILNSMIIIIHL). Over 203–219 (VEVVPNGELVRKDPVSC) the chain is Extracellular. Cys-219 and Cys-289 are oxidised to a cystine. A helical membrane pass occupies residues 220–242 (KILHFFHQYMMACNYFWMLCEGI). The Cytoplasmic portion of the chain corresponds to 243–259 (YLHTLIVVSVFNEAKHL). Residues 260 to 280 (RWYYLLGWGFPLVPTTIHAIT) traverse the membrane as a helical segment. Topologically, residues 281–296 (RALYFNDNCWISVDTH) are extracellular. Residues 297-320 (LLYIIHGPVMVALVVNFFFLLNIV) form a helical membrane-spanning segment. Topologically, residues 321 to 340 (RVLVTKMRETHEAESYMYLK) are cytoplasmic. A helical membrane pass occupies residues 341–359 (AVKATMILVPLLGIQFVVF). Residues 360 to 367 (PWRPSNKV) lie on the Extracellular side of the membrane. Residues 368 to 394 (LGKIYDYFMHSLIHFQGFFVATIYCFC) traverse the membrane as a helical segment. The Cytoplasmic portion of the chain corresponds to 395 to 478 (NNEVQTTLKR…LNIIEKESSA (84 aa)).

Belongs to the G-protein coupled receptor 2 family. In terms of assembly, heterodimer of CALCR and RAMP1, RAMP2 or RAMP3; the receptor complexes function as AMYR1, AMYR2 and AMYR3 receptors, respectively, and respond to amylin/IAPP, calcitonin/CT and CGRP1 ligands. Interacts with GPRASP2.

The protein localises to the cell membrane. G protein-coupled receptor activated by ligand peptides amylin (IAPP), calcitonin (CT/CALCA) and calcitonin gene-related peptide type 1 (CGRP1/CALCA). CALCR interacts with receptor-activity-modifying proteins RAMP1, 2 and 3 to form receptor complexes AMYR1, 2 and 3, respectively. IAPP, CT and CGRP1 activate CALCR and AMYRs with distinct modes of receptor activation resulting in specific phenotypes. Ligand binding causes a conformation change that triggers signaling via guanine nucleotide-binding proteins (G proteins) and modulates the activity of downstream effectors. Activates cAMP-dependent pathway. This is Calcitonin receptor from Cavia porcellus (Guinea pig).